Reading from the N-terminus, the 119-residue chain is Ribosome-binding factor A (119 aa).

This sequence belongs to the RbfA family. Monomer. Binds 30S ribosomal subunits, but not 50S ribosomal subunits or 70S ribosomes.

It is found in the cytoplasm. One of several proteins that assist in the late maturation steps of the functional core of the 30S ribosomal subunit. Associates with free 30S ribosomal subunits (but not with 30S subunits that are part of 70S ribosomes or polysomes). Required for efficient processing of 16S rRNA. May interact with the 5'-terminal helix region of 16S rRNA. This chain is Ribosome-binding factor A, found in Chlorobium luteolum (strain DSM 273 / BCRC 81028 / 2530) (Pelodictyon luteolum).